We begin with the raw amino-acid sequence, 116 residues long: NADH-ubiquinone oxidoreductase chain 3 (116 aa).

Helical transmembrane passes span 3 to 23, 56 to 76, and 87 to 107; these read LITTIITITITLSAVLATVSF, FFLIAILFLLFDLEIALLLPL, and LTLVWSTAVLALLTLGLIYEW.

This sequence belongs to the complex I subunit 3 family.

It is found in the mitochondrion membrane. The catalysed reaction is a ubiquinone + NADH + 5 H(+)(in) = a ubiquinol + NAD(+) + 4 H(+)(out). Its function is as follows. Core subunit of the mitochondrial membrane respiratory chain NADH dehydrogenase (Complex I) that is believed to belong to the minimal assembly required for catalysis. Complex I functions in the transfer of electrons from NADH to the respiratory chain. The immediate electron acceptor for the enzyme is believed to be ubiquinone. The polypeptide is NADH-ubiquinone oxidoreductase chain 3 (MT-ND3) (Oncorhynchus kisutch (Coho salmon)).